The primary structure comprises 280 residues: Putative pyruvate, phosphate dikinase regulatory protein 1 (280 aa).

Residue 152–159 (GVSRTSKT) participates in ADP binding.

The protein belongs to the pyruvate, phosphate/water dikinase regulatory protein family. PDRP subfamily.

It carries out the reaction N(tele)-phospho-L-histidyl/L-threonyl-[pyruvate, phosphate dikinase] + ADP = N(tele)-phospho-L-histidyl/O-phospho-L-threonyl-[pyruvate, phosphate dikinase] + AMP + H(+). The catalysed reaction is N(tele)-phospho-L-histidyl/O-phospho-L-threonyl-[pyruvate, phosphate dikinase] + phosphate + H(+) = N(tele)-phospho-L-histidyl/L-threonyl-[pyruvate, phosphate dikinase] + diphosphate. In terms of biological role, bifunctional serine/threonine kinase and phosphorylase involved in the regulation of the pyruvate, phosphate dikinase (PPDK) by catalyzing its phosphorylation/dephosphorylation. The protein is Putative pyruvate, phosphate dikinase regulatory protein 1 of Latilactobacillus sakei subsp. sakei (strain 23K) (Lactobacillus sakei subsp. sakei).